The chain runs to 34 residues: Photosystem II reaction center protein T (34 aa).

Residues 3–23 traverse the membrane as a helical segment; sequence ALVYTFLLVSTLGIIFFAIFF.

It belongs to the PsbT family. In terms of assembly, PSII is composed of 1 copy each of membrane proteins PsbA, PsbB, PsbC, PsbD, PsbE, PsbF, PsbH, PsbI, PsbJ, PsbK, PsbL, PsbM, PsbT, PsbY, PsbZ, Psb30/Ycf12, at least 3 peripheral proteins of the oxygen-evolving complex and a large number of cofactors. It forms dimeric complexes.

It is found in the plastid. It localises to the chloroplast thylakoid membrane. In terms of biological role, found at the monomer-monomer interface of the photosystem II (PS II) dimer, plays a role in assembly and dimerization of PSII. PSII is a light-driven water plastoquinone oxidoreductase, using light energy to abstract electrons from H(2)O, generating a proton gradient subsequently used for ATP formation. This is Photosystem II reaction center protein T from Solanum lycopersicum (Tomato).